The sequence spans 240 residues: Homeobox-leucine zipper protein HOX14 (240 aa).

Residues 26–64 (SGEVQGERPRARRRRRRGARCVGGGGGGGEVDGGDPKKR) are disordered. A compositionally biased stretch (basic residues) spans 35-44 (RARRRRRRGA). Residues 46-56 (CVGGGGGGGEV) are compositionally biased toward gly residues. Positions 59–118 (GDPKKRRLSDEQVEMLELSFREERKLETGRKVHLASELGLDPKQVAVWFQNRRARHKSKL) form a DNA-binding region, homeobox. The stretch at 108–167 (QNRRARHKSKLLEEEFSKLKHAHDAAILHKCHLENEVLRLKERLVVAEEEVRRLRSAAGS) forms a coiled coil.

Belongs to the HD-ZIP homeobox family. Class I subfamily. In terms of tissue distribution, expressed in roots, stems, leaf blades and panicles.

It localises to the nucleus. In terms of biological role, probable transcription factor. This is Homeobox-leucine zipper protein HOX14 (HOX14) from Oryza sativa subsp. japonica (Rice).